The following is a 277-amino-acid chain: Large ribosomal subunit protein uL2 (277 aa).

2 disordered regions span residues 37–60 (KNST…GHKH) and 223–264 (VVMN…NKRT). A compositionally biased stretch (polar residues) spans 39–49 (STAGRNNNGHI). Residues 50 to 60 (TTRHKGGGHKH) are compositionally biased toward basic residues. A compositionally biased stretch (basic and acidic residues) spans 229 to 244 (DHPHGGGEGRTGEARE).

It belongs to the universal ribosomal protein uL2 family. In terms of assembly, part of the 50S ribosomal subunit. Forms a bridge to the 30S subunit in the 70S ribosome.

In terms of biological role, one of the primary rRNA binding proteins. Required for association of the 30S and 50S subunits to form the 70S ribosome, for tRNA binding and peptide bond formation. It has been suggested to have peptidyltransferase activity; this is somewhat controversial. Makes several contacts with the 16S rRNA in the 70S ribosome. In Neisseria meningitidis serogroup B (strain ATCC BAA-335 / MC58), this protein is Large ribosomal subunit protein uL2.